The following is a 364-amino-acid chain: Zinc transporter 3 (364 aa).

The N-terminal stretch at 1 to 23 (MGAKKHTLQVLPWLLLFAQHTAA) is a signal peptide. Residues 24–44 (SACDCANTTDGADRQGAMKLK) lie on the Extracellular side of the membrane. N-linked (GlcNAc...) asparagine glycosylation is present at N30. A helical membrane pass occupies residues 45–65 (LIAIASILAAGAAGVLVPVIG). Topologically, residues 66-76 (RSMAALRPDGD) are cytoplasmic. The chain crosses the membrane as a helical span at residues 77–97 (IFFAVKAFAAGVILATGMVHI). At 98–119 (LPAAFDALTSPCLKRGGGDRNP) the chain is on the extracellular side. A helical transmembrane segment spans residues 120–140 (FPFAGLVSMSAAVSTMVVDSL). Over 141 to 213 (AAGYYHRSQF…ESIRHKVVSQ (73 aa)) the chain is Cytoplasmic. Residues 214-234 (VLELGILVHSVIIGVSLGASV) form a helical membrane-spanning segment. The Extracellular portion of the chain corresponds to 235–241 (RPSTIRP). A helical membrane pass occupies residues 242–262 (LVGALSFHQFFEGVGLGGCIV). At 263 to 271 (QANFKVRAT) the chain is on the cytoplasmic side. The chain crosses the membrane as a helical span at residues 272 to 292 (VIMAIFFSLTAPVGIVLGIAI). Topologically, residues 293–303 (SSSYNVHSSTA) are extracellular. A helical transmembrane segment spans residues 304 to 324 (FVVEGVFNSASAGILIYMSLV). Residues 325 to 343 (DLLATDFNNPKLQINTKLQ) lie on the Cytoplasmic side of the membrane. Residues 344–364 (LMAYLALFLGAGLMSMLAIWA) form a helical membrane-spanning segment.

Belongs to the ZIP transporter (TC 2.A.5) family. In terms of tissue distribution, expressed in vascular bundles of stems.

The protein resides in the cell membrane. Its function is as follows. Zinc transporter that may mediate zinc uptake from the rhizosphere. Seems specific to zinc ions and may not transport other divalent cations. The sequence is that of Zinc transporter 3 (ZIP3) from Oryza sativa subsp. japonica (Rice).